A 473-amino-acid polypeptide reads, in one-letter code: Photosystem II CP43 reaction center protein (473 aa).

Positions Met-1–Glu-14 are excised as a propeptide. An N-acetylthreonine modification is found at Thr-15. Thr-15 carries the phosphothreonine modification. 5 helical membrane passes run Leu-69–Ala-93, Leu-134–Asn-155, Lys-178–Thr-200, Lys-255–Ser-275, and Trp-291–Ala-312. Glu-367 provides a ligand contact to [CaMn4O5] cluster. Residues Arg-447–Pro-471 traverse the membrane as a helical segment.

This sequence belongs to the PsbB/PsbC family. PsbC subfamily. As to quaternary structure, PSII is composed of 1 copy each of membrane proteins PsbA, PsbB, PsbC, PsbD, PsbE, PsbF, PsbH, PsbI, PsbJ, PsbK, PsbL, PsbM, PsbT, PsbX, PsbY, PsbZ, Psb30/Ycf12, at least 3 peripheral proteins of the oxygen-evolving complex and a large number of cofactors. It forms dimeric complexes. Binds multiple chlorophylls and provides some of the ligands for the Ca-4Mn-5O cluster of the oxygen-evolving complex. It may also provide a ligand for a Cl- that is required for oxygen evolution. PSII binds additional chlorophylls, carotenoids and specific lipids. is required as a cofactor.

The protein resides in the plastid. It localises to the chloroplast thylakoid membrane. In terms of biological role, one of the components of the core complex of photosystem II (PSII). It binds chlorophyll and helps catalyze the primary light-induced photochemical processes of PSII. PSII is a light-driven water:plastoquinone oxidoreductase, using light energy to abstract electrons from H(2)O, generating O(2) and a proton gradient subsequently used for ATP formation. The polypeptide is Photosystem II CP43 reaction center protein (Atropa belladonna (Belladonna)).